A 311-amino-acid polypeptide reads, in one-letter code: Methionyl-tRNA formyltransferase (311 aa).

Position 110 to 113 (110 to 113 (SLLP)) interacts with (6S)-5,6,7,8-tetrahydrofolate.

The protein belongs to the Fmt family.

The catalysed reaction is L-methionyl-tRNA(fMet) + (6R)-10-formyltetrahydrofolate = N-formyl-L-methionyl-tRNA(fMet) + (6S)-5,6,7,8-tetrahydrofolate + H(+). In terms of biological role, attaches a formyl group to the free amino group of methionyl-tRNA(fMet). The formyl group appears to play a dual role in the initiator identity of N-formylmethionyl-tRNA by promoting its recognition by IF2 and preventing the misappropriation of this tRNA by the elongation apparatus. This Streptococcus pyogenes serotype M28 (strain MGAS6180) protein is Methionyl-tRNA formyltransferase.